The chain runs to 275 residues: 4-hydroxy-tetrahydrodipicolinate reductase (275 aa).

Residues 13-18 (GAAGKM), 108-110 (GTT), and 134-137 (APNF) each bind NAD(+). His164 (proton donor/acceptor) is an active-site residue. His165 contributes to the (S)-2,3,4,5-tetrahydrodipicolinate binding site. The active-site Proton donor is the Lys168. Residue 174–175 (GT) participates in (S)-2,3,4,5-tetrahydrodipicolinate binding.

It belongs to the DapB family.

It is found in the cytoplasm. It carries out the reaction (S)-2,3,4,5-tetrahydrodipicolinate + NAD(+) + H2O = (2S,4S)-4-hydroxy-2,3,4,5-tetrahydrodipicolinate + NADH + H(+). The enzyme catalyses (S)-2,3,4,5-tetrahydrodipicolinate + NADP(+) + H2O = (2S,4S)-4-hydroxy-2,3,4,5-tetrahydrodipicolinate + NADPH + H(+). Its pathway is amino-acid biosynthesis; L-lysine biosynthesis via DAP pathway; (S)-tetrahydrodipicolinate from L-aspartate: step 4/4. Its function is as follows. Catalyzes the conversion of 4-hydroxy-tetrahydrodipicolinate (HTPA) to tetrahydrodipicolinate. This is 4-hydroxy-tetrahydrodipicolinate reductase from Synechocystis sp. (strain ATCC 27184 / PCC 6803 / Kazusa).